A 305-amino-acid polypeptide reads, in one-letter code: Protoheme IX farnesyltransferase (305 aa).

Transmembrane regions (helical) follow at residues 31–51 (VMSLVMFTGFVGMWLAPYSVH), 52–72 (PFIAVIVLACISLGAGSAGAI), 102–119 (ALSFGLITGFFAVFFMAL), 123–145 (LLASFLLLFTIFYYICIYTIWLK), 151–171 (NIVIGGVSGALPPVIGYAAVS), 179–199 (IILFLIIFIWTPPHSWALALF), 218–238 (ILYTKEQILIYSILLFLVSLM), 240–260 (FFIGMNNFIYLIIAGMLGLVF), and 281–301 (FAYSIFYLFFIFLLLSSTSTI).

The protein belongs to the UbiA prenyltransferase family. Protoheme IX farnesyltransferase subfamily.

Its subcellular location is the cell inner membrane. It carries out the reaction heme b + (2E,6E)-farnesyl diphosphate + H2O = Fe(II)-heme o + diphosphate. The protein operates within porphyrin-containing compound metabolism; heme O biosynthesis; heme O from protoheme: step 1/1. Its function is as follows. Converts heme B (protoheme IX) to heme O by substitution of the vinyl group on carbon 2 of heme B porphyrin ring with a hydroxyethyl farnesyl side group. This is Protoheme IX farnesyltransferase from Rickettsia akari (strain Hartford).